The sequence spans 432 residues: Tryptophan--tRNA ligase (432 aa).

ATP-binding positions include 13–15 and 21–22; these read TTS and GN. The short motif at 14–22 is the 'HIGH' region element; it reads TSGTPHLGN. Aspartate 146 contacts L-tryptophan. Residues 158–160, leucine 198, and 205–209 contribute to the ATP site; these read GRD and KMSKS. The short motif at 205–209 is the 'KMSKS' region element; sequence KMSKS.

This sequence belongs to the class-I aminoacyl-tRNA synthetase family. Homodimer.

The protein localises to the cytoplasm. The enzyme catalyses tRNA(Trp) + L-tryptophan + ATP = L-tryptophyl-tRNA(Trp) + AMP + diphosphate + H(+). Its function is as follows. Catalyzes the attachment of tryptophan to tRNA(Trp). This Xanthomonas axonopodis pv. citri (strain 306) protein is Tryptophan--tRNA ligase.